A 158-amino-acid polypeptide reads, in one-letter code: Endoribonuclease YbeY (158 aa).

Zn(2+) is bound by residues His-114, His-118, and His-124.

The protein belongs to the endoribonuclease YbeY family. Requires Zn(2+) as cofactor.

The protein localises to the cytoplasm. Single strand-specific metallo-endoribonuclease involved in late-stage 70S ribosome quality control and in maturation of the 3' terminus of the 16S rRNA. This Pasteurella multocida (strain Pm70) protein is Endoribonuclease YbeY.